We begin with the raw amino-acid sequence, 112 residues long: Colipase (112 aa).

Residues 1 to 17 (MEKILILLLVALSVAYA) form the signal peptide. A propeptide spans 18 to 22 (APGPR) (enterostatin, activation peptide). 5 disulfide bridges follow: Cys-34–Cys-45, Cys-40–Cys-56, Cys-44–Cys-78, Cys-66–Cys-86, and Cys-80–Cys-104.

It belongs to the colipase family. As to quaternary structure, forms a 1:1 stoichiometric complex with pancreatic lipase. Expressed by the pancreas.

The protein resides in the secreted. Its function is as follows. Colipase is a cofactor of pancreatic lipase. It allows the lipase to anchor itself to the lipid-water interface. Without colipase the enzyme is washed off by bile salts, which have an inhibitory effect on the lipase. In terms of biological role, enterostatin has a biological activity as a satiety signal. In Homo sapiens (Human), this protein is Colipase.